Consider the following 391-residue polypeptide: Terminal nucleotidyltransferase 5C (391 aa).

This sequence belongs to the TENT family. In terms of assembly, interacts with BCCIP and PABPC1; the interaction has no effect on TENT5C poly(A) polymerase function. Interacts with PLK4; this interaction leads to the TENT5C recruitment into the centrosome.

The protein localises to the nucleus. It localises to the cytoplasm. The protein resides in the cytoskeleton. Its subcellular location is the microtubule organizing center. It is found in the centrosome. The enzyme catalyses RNA(n) + ATP = RNA(n)-3'-adenine ribonucleotide + diphosphate. Functionally, catalyzes the transfer of one adenosine molecule from an ATP to an mRNA poly(A) tail bearing a 3'-OH terminal group and enhances mRNA stability and gene expression. Can also elongate RNA oligos ending with uridine molecule, provided that the sequence is adenosine-rich. Mainly targets mRNAs encoding endoplasmic reticulum-targeted protein. The chain is Terminal nucleotidyltransferase 5C from Macaca fascicularis (Crab-eating macaque).